The chain runs to 732 residues: Aldehyde oxidoreductase molybdenum-binding subunit PaoC (732 aa).

Mo-molybdopterin cytosine dinucleotide-binding positions include 241-242, 468-470, 511-512, 615-621, Q625, and 688-691; these read GF, IGT, GA, RILNPKT, and KGVG. The Proton acceptor role is filled by E692.

This sequence belongs to the xanthine dehydrogenase family. Heterotrimer composed of PaoA, PaoB and PaoC. Requires Mo-molybdopterin cytosine dinucleotide as cofactor.

The protein resides in the periplasm. The enzyme catalyses an aldehyde + A + H2O = a carboxylate + AH2 + H(+). The complex requires PaoD for activity. In terms of biological role, oxidizes aldehydes to the corresponding carboxylic acids with a preference for aromatic aldehydes. It might play a role in the detoxification of aldehydes to avoid cell damage. This Escherichia coli (strain K12) protein is Aldehyde oxidoreductase molybdenum-binding subunit PaoC.